The chain runs to 279 residues: Shikimate dehydrogenase (NADP(+)) (279 aa).

Shikimate contacts are provided by residues 17-19 (SLS) and Thr-64. Lys-68 (proton acceptor) is an active-site residue. Position 80 (Asp-80) interacts with NADP(+). Shikimate-binding residues include Asn-89 and Asp-105. NADP(+)-binding positions include 129-133 (GAGGS), 153-158 (NRTAKK), and Leu-221. Tyr-223 lines the shikimate pocket. Gly-245 is a binding site for NADP(+).

It belongs to the shikimate dehydrogenase family. In terms of assembly, homodimer.

It catalyses the reaction shikimate + NADP(+) = 3-dehydroshikimate + NADPH + H(+). The protein operates within metabolic intermediate biosynthesis; chorismate biosynthesis; chorismate from D-erythrose 4-phosphate and phosphoenolpyruvate: step 4/7. Involved in the biosynthesis of the chorismate, which leads to the biosynthesis of aromatic amino acids. Catalyzes the reversible NADPH linked reduction of 3-dehydroshikimate (DHSA) to yield shikimate (SA). The chain is Shikimate dehydrogenase (NADP(+)) from Idiomarina loihiensis (strain ATCC BAA-735 / DSM 15497 / L2-TR).